Consider the following 349-residue polypeptide: Protein RecA (349 aa).

Residue 64 to 71 (GPESSGKT) participates in ATP binding.

The protein belongs to the RecA family.

It is found in the cytoplasm. In terms of biological role, can catalyze the hydrolysis of ATP in the presence of single-stranded DNA, the ATP-dependent uptake of single-stranded DNA by duplex DNA, and the ATP-dependent hybridization of homologous single-stranded DNAs. It interacts with LexA causing its activation and leading to its autocatalytic cleavage. This is Protein RecA from Rhodopseudomonas palustris (strain ATCC BAA-98 / CGA009).